The chain runs to 450 residues: MKTVTEFQNKNILVLGIAKSGYAAATLLQKLGANVIVNDGKPLAENVLAAELQAKGMDVVCGGHPLELLERNISLVVKNPGIPYSNPILVAAKEKQIPIVTEVELAYRISEAPFVGITGSNGKTTTTMLTFEMLKEGQKHPVIAGNIGTVACEVAQDAKENEVVVTELSSFQLMGVELFQPKIAAFLNLFEAHLDYHGTKKEYGLAKANIFKNQTENDYSVINADDADVMALSAYSKGQKVLFSTTKEIEDGACIKDNALYFKAEKVVEVDDIVLPGQHNLENILAAMSIAKLLGVSNEAITAVLKRFTGVKHRLEYVTTINNRKFYNDSKATNMLATEKALSAFTQPTVLLAGGLDRGNEFDDLIPYFKNVKAIVTFGQTAPKLVRAAEKAGLETIESVDTLDEAVVKAYAHSTDGDVILLSPACASWDQFKTFEERGDIFIQAVHKLI.

119-125 (GSNGKTT) contributes to the ATP binding site.

Belongs to the MurCDEF family.

The protein resides in the cytoplasm. It carries out the reaction UDP-N-acetyl-alpha-D-muramoyl-L-alanine + D-glutamate + ATP = UDP-N-acetyl-alpha-D-muramoyl-L-alanyl-D-glutamate + ADP + phosphate + H(+). Its pathway is cell wall biogenesis; peptidoglycan biosynthesis. Cell wall formation. Catalyzes the addition of glutamate to the nucleotide precursor UDP-N-acetylmuramoyl-L-alanine (UMA). This is UDP-N-acetylmuramoylalanine--D-glutamate ligase from Bacillus thuringiensis (strain Al Hakam).